A 243-amino-acid polypeptide reads, in one-letter code: Terpene cyclase dpasB (243 aa).

7 consecutive transmembrane segments (helical) span residues 16–36 (VVWV…SNYI), 50–70 (MALM…FIYP), 79–99 (IHTL…RYGA), 112–132 (LPVI…AFAE), 141–161 (AVSG…QLLC), 172–189 (LWLA…PNML), and 207–227 (IWFL…LWYV).

The protein belongs to the paxB family.

The protein resides in the membrane. It functions in the pathway secondary metabolite biosynthesis; terpenoid biosynthesis. Terpene cyclase; part of the gene cluster that mediates the biosynthesis of the diterpenoid pyrones subglutinols A and B. The first step of the pathway is the synthesis of the alpha-pyrone moiety by the polyketide synthase dpasA via condensation of one acetyl-CoA starter unit with 3 malonyl-CoA units and 2 methylations. The alpha-pyrone is then combined with geranylgeranyl pyrophosphate (GGPP) formed by the GGPP synthase dpasD through the action of the prenyltransferase dpasC to yield a linear alpha-pyrone diterpenoid. Subsequent steps in the diterpenoid pyrone biosynthetic pathway involve the decalin core formation, which is initiated by the epoxidation of the C10-C11 olefin by the FAD-dependent oxidoreductase dpasE, and is followed by a cyclization cascade catalyzed by the terpene cyclase dpasB. The FAD-linked oxidoreductase dpasF is then involved in tetrahydrofuran (THF) ring formation at the C5 unit to complete the formation of subglutinols A and B. DpasF possesses also an additional catalytic ability of multi-step oxidations to generate a new DDP analog with an enone system at the C5 named FDDP A. This chain is Terpene cyclase dpasB, found in Apiospora sacchari (Arthrinium sacchari).